We begin with the raw amino-acid sequence, 826 residues long: MWALCSLLRSATGRTMSQGRTISQGSARRQRPPKDPLRHLRTREKRGPSGSSGGANTVYLQVVAVGSRDAGAALYVFSEFNRYLFNCGEGVQRLMQEHKLKVARLDNIFLTRMHWSNVGGLSGMILTLKETGLPKCVLSGPPQLEKYLEAIKIFSGPLKGIELAVRPHSAPEYKDETMTVYQIPIHSEQRSGKHQPWQSPERPLGRLSPERSSDSESNESEPHLPRGVSQRRGVRDPSLVVAFICKLHLKRGSFLVLKAKELGLPVGTAAIAPIIAAVKDGKSITHEGREILAEELCTPPDPGAAFVVVECPDEGFIQPICENATFQRYQGKADAPVALVVHMAPESVLADSRYQQWMERFGPDTQHLVLNENCASVHNLRSYKIQTQLNLIHPDIFPLLTSFPRKKEGPTLSVPVVQGECLLKYQLRPRREWQRDAIITCNPEEFIDEALQLPNFQESMQEYRRSAQDGPAPAEKRSQYPEIVFLGTGSAVPMKTRNVSATLVNISPDTSLLLDCGEGTFGQLYRHYGDQVDRVLGSLAAVFVSHLHADHHTGLLNILLQRERALASLGKPFHPLLVVAPTQLKAWLQQYHNQCQEVLHHVSMIPAKYLQVGAEISSPAVERLISSLLRTCDLEEFQTCLVRHCRHAFGCALVHTSGWKVVYSGDTMPCEALVQMGKDATLLIHEATLEDGLEEEAVEKTHSTTSQAIRVGMRMNAEFIMLNHFSQRYAKVPLFSPDFNEKVGIAFDHMKVSFGDFPTVPKLIPPLKALFAGDIEEMEERREKRELRQVRAALLSRALTDDLEDGEPQQKRAHTEEPQSKKVRAQ.

Residues 1–16 constitute a mitochondrion transit peptide; sequence MWALCSLLRSATGRTM. Polar residues predominate over residues 15–27; the sequence is TMSQGRTISQGSA. Disordered stretches follow at residues 15 to 53 and 187 to 231; these read TMSQGRTISQGSARRQRPPKDPLRHLRTREKRGPSGSSG and SEQR…VSQR. A phosphoserine mark is found at Ser-199, Ser-208, Ser-212, Ser-229, Ser-618, and Ser-736. The span at 208–224 shows a compositional bias: basic and acidic residues; that stretch reads SPERSSDSESNESEPHL. The disordered stretch occupies residues 798 to 826; sequence ALTDDLEDGEPQQKRAHTEEPQSKKVRAQ. Residues 808–820 are compositionally biased toward basic and acidic residues; sequence PQQKRAHTEEPQS.

It belongs to the RNase Z family. Homodimer. Interacts with PTCD1. Requires Zn(2+) as cofactor.

The protein resides in the mitochondrion. The protein localises to the mitochondrion matrix. Its subcellular location is the mitochondrion nucleoid. It localises to the nucleus. It carries out the reaction Endonucleolytic cleavage of RNA, removing extra 3' nucleotides from tRNA precursor, generating 3' termini of tRNAs. A 3'-hydroxy group is left at the tRNA terminus and a 5'-phosphoryl group is left at the trailer molecule.. Functionally, zinc phosphodiesterase, which displays mitochondrial tRNA 3'-processing endonuclease activity. Involved in tRNA maturation, by removing a 3'-trailer from precursor tRNA. Associates with mitochondrial DNA complexes at the nucleoids to initiate RNA processing and ribosome assembly. The protein is Zinc phosphodiesterase ELAC protein 2 (ELAC2) of Macaca fascicularis (Crab-eating macaque).